Consider the following 3106-residue polypeptide: MVQNTDNTRNSKLIRDRNDYDDNDDVDSGDIAVIGIGLRFPSGNLKESISKPNQLFNELLNGLDGIVTTSERWSDNYYLNGEIVSKFAGLLPLDEWKQFDPIFFAINPSNDNVSSIDPQQRLLLKCVWEALEDSGIDPISLRGTNTSTFIGSSTIDYSILQRSPFETQNNIFGSTTHSVANRIGYCFDFRGENLTIDTACSSSSNAINCGYNSIKSNKSNVSIVGGVNFLLDPHLSKSFTQLGLLSPTGRCHTFSSDADGYVRSEGVGIVVLKKLKDAIKDSNNIYCVIKGSSSNIDGNFDKLNFYSPSKSSQCENIKLAIKSTNGQINESDIDYCETHGTGTPTGDPIELEGISRVFNNIASTTTNNNNKQVLVGSIKSNIGHTEACSGVASLIKCCLMFKNKLFLQNINFKEPNPLINFKEWGLKVVTEPIKFNENKPTVMLINNFGITGSNVCLILSEFENNHNDYHKMEIDNKLSEEKKKYLIPLSSNSSTSLNNYKSSIIKHSNSSTTTTTTSFKEFVYNQIKFKSTSLIQKSVIIASDWNEFQDENNQIKLNNSDNLISNITVEKKKSPITVMVLCGQGSQYNKMALSLYDNEPIFRESVNRFDKELFKYYGYSVLDKLRSIDDKDLISIHQPILAQPANVMIQVSLYELYKHWGVSADIIIGHSLGEVSSPYCSGMIDFQTLCYLTYHRSVAQNRTTGTGRMLSVNISSDEFINKYQSTTKYKSLEIACYNSPTSIVIAGKEDLLNEITKEFKSNDIFCSMLGSLSSFHTSSQQMIKDEVCSLNISSKQPSIAVFSTVTTNLFNHQSSPFNANYVFDNIIQPVYFTQTITNLYKHIESNDMGNEITFIEVSPHPTLQYYLNQMKSTQSSYFNNGKNITIYSPLNKKKNDYNEFLKTISLLYVKNNFDINFKSQLINNNNNNYSNQLNNLPLYQWDDKEYFKLNSLLEKIKSEGPSIHGLGNNTDSPNPSYQTFIDIKKSPFQWLKGHQVSDKFYYPGMGYVHNLLSIYPNQDITISSLEFKSPLVLTEGNRQCLQTTIAPLSKNEFNIKSYYKDQKTNQWILTSLGNFSLTKHNSIISNKLINIQSLKDKCNFTSISKQDFYETIRIKTNLTYKGLFQGVKQCHIGNNCSLAIVSLNEIYNQKEYNHLINNSNMNTFLNTAILDTCLHGSLVAVTQPVVLDKIEGFKYYSSNIPSLNKNNNNNDDNDDDIKELYVFSDIKPRTNSQTYSISVKIILPNGTLLVDISNVVCALVSLDSNPDSTIICEPPSNNIYTPYLQSKDSVINKPEQFKHLYRVDEFSVKEEDNQFLSNESLLSLFYKHINNRCPSINLESLTTLEYNQFKQLYYNSSANENLFKFIFENLKKYSNIVNLDNDHSNIKSKNEELFIRTTKIMAKQLFPLKDDDSITDTPQSLFESGYLDDFYKNSRVVQPLNSLLSEIIVETLKPILNEPIVFRILEAGGGTGSLSLLILEKICKLLNNNSTTSIINIEFTWSDISASFFAEIKEKFSSFTNRNNLNIIYRVLDLEKPLLDQDLKASYYDFVVMSNVMHVVKKLKPTLNEIHNILTPNGQLLLIEPPHKSFIYDSVFGCFSQWWPSSDSDIELRPDRCCMKQEKWINLLNQCNYRDTIMSGNDNLLFLIQTRKPTINEIISEQSISLDQLNSFNNIILFSNNNNNNNNNNSDNNRNSCSSILDSITLNQELKHKIININNFNEFQSWITNNQTKDDCNKTLIIFLKSIESIMNTSNFKEITFEYIQINQLILKLELSNNFKHLLLSLNSSTDNYLSSSIVGAARYFVEFPQLDLLTLNYDNVSIENNQQLSLINYLINPNNNIQKEFTINNNRVYYERYCRRSNNIKSKLQSKSFENNKDNLCIQLNSNLEYQLYSKKDKLNSNEVEIEIKATGMNYKDYLMYIGMIGTNLDIKYGKEIENCIGFNNPKIGKDFSGIITRLGSNVKKFKVGDQVCGVGSKTSSSHIIVDYDYIYYKPLNYSHSVSALIPSVYITSLHSLYGIGSLKSNESILIHSAAGGVGISSLDLLKSKQHQGYIFLTVGSKDKEEYLINKYGSLITAIYSSRNKDYVYEIKNKLIELGVVEQHQQGVDLILNTLSSEYMDSNFQCLNLSGRIVDLSIIHLTSNDYMTNNHYKFNMNYGNVYVEDFTSKLIKSYLKKIIKMINSNKLELSVPIIEYSNNQFKDAIEYINQRKHIGKIIVNHNQDEFNRVYNNYQSNNNQIILKHSYDISKLNIGKNILLTGQTGIVLEILKYLVKYSNDSIENIIILSKSKLKWELELLINQSKFKKDNNIKFHFNQIDIEDSNKVNQVLNQLELNENITNIDSIIHFAFMNDIGDVQQVDMNRLNNTHGAKTIGAINLHNQSINRSWNIKQFIMASSVVSILGSDQQCCYVSACSVIDSLSKYRHSIGLPSLAINLGAISSTGFVSRNNAIETMFKSSILKLFSPQLVISSLDLFIQNQHQYPNYCLSDFNFEILPSTLTNQYHSKFDFEINIVKKSNQIKSFTGSNDGDNNNEIIRSTILNKICELLSIDESKINEDLQLTQYGMDSLVIVQLKNFIDNQLGHNIITIQQLQNNKINQSIEIILSAHNNNNKNNNNNNNINNNNKNNNNNNNKNNNNINNNINNNKNNNNNNNLVKKEQQSLDEFIKNEMKLNESIISRPYSIKNILNKSNNSKSIFLTGSTGFLGAYLLTELIKMNNISKIYCLIRNNSKLTNPIDVIINNLKKHQLINMNKESPNQRLTKIINHTGNISNDKLSNIENSEYYKQISEDQLIKIIPMIGDISKDKFGLTEQDYLKLSNECDIIINSAADLNLKSNYEESKTVNVNSVNQIVKLSVSNNSSQKLIVHFSSIAVFINHPFKDGEEFEETNILPNFDTTPIGYIQCKVISEKLLTNAAESRGIPSIIIRPPDIFSNPITGIGHSNDFVSLLLKTSKEIGYYPNIYKSIFTTPVTTIAKTTIDLIFNENSWNQNKSKPISIYSLNGNSIEMKSIYKFLENNYNCKEIDYQEWIELVSKSNGMSSKRYSTFHIHDNQNLMVSNFKINSLFKMSNSTKELLTSIGSYNHQDWEINESIILKNINNNNN.

Residues 1-11 (MVQNTDNTRNS) show a composition bias toward polar residues. Positions 1–20 (MVQNTDNTRNSKLIRDRNDY) are disordered. The Ketosynthase family 3 (KS3) domain occupies 28–461 (SGDIAVIGIG…GSNVCLILSE (434 aa)). Catalysis depends on for beta-ketoacyl synthase activity residues C200, H339, and H384. Residues 661 to 694 (GVSADIIIGHSLGEVSSPYCSGMIDFQTLCYLTY) form an acyl/malonyl transferase region. The active-site For acyl/malonyl transferase activity is the S671. The N-terminal hotdog fold stretch occupies residues 961-1082 (PSIHGLGNNT…GNFSLTKHNS (122 aa)). The 306-residue stretch at 961–1266 (PSIHGLGNNT…CALVSLDSNP (306 aa)) folds into the PKS/mFAS DH domain. H994 serves as the catalytic Proton acceptor; for dehydratase activity. The segment at 1099–1266 (NFTSISKQDF…CALVSLDSNP (168 aa)) is C-terminal hotdog fold. Catalysis depends on D1171, which acts as the Proton donor; for dehydratase activity. Residues 2533 to 2610 (NNNEIIRSTI…QSIEIILSAH (78 aa)) form the Carrier domain. Position 2570 is an O-(pantetheine 4'-phosphoryl)serine (S2570). Residues 2609-2656 (AHNNNNKNNNNNNNINNNNKNNNNNNNKNNNNINNNINNNKNNNNNNN) adopt a coiled-coil conformation. The interval 2614–2656 (NKNNNNNNNINNNNKNNNNNNNKNNNNINNNINNNKNNNNNNN) is disordered.

Pantetheine 4'-phosphate is required as a cofactor.

Its function is as follows. Probable polyketide synthase. The protein is Probable polyketide synthase 29 (pks29) of Dictyostelium discoideum (Social amoeba).